The following is a 676-amino-acid chain: Capsid vertex component 1 (676 aa).

The span at 253–264 (HPVRPSSSRVAS) shows a compositional bias: low complexity. The tract at residues 253-308 (HPVRPSSSRVASGLLQSAKGHGAQTSNTDPINNGSFDGVLEPPGQGRFTGKKNNSS) is disordered. The span at 275-287 (AQTSNTDPINNGS) shows a compositional bias: polar residues.

It belongs to the herpesviridae CVC1 protein family. As to quaternary structure, interacts (via C-terminus) with capsid vertex component 2/CVC2.

It localises to the virion. The protein localises to the host nucleus. Capsid vertex-specific component that plays a role during viral DNA encapsidation, assuring correct genome cleavage and presumably stabilizing capsids that contain full-length viral genomes. This Varicella-zoster virus (strain Dumas) (HHV-3) protein is Capsid vertex component 1.